The chain runs to 213 residues: uncharacterized protein (213 aa).

Catalysis depends on charge relay system residues serine 114, aspartate 162, and histidine 194.

The protein belongs to the AB hydrolase superfamily. AB hydrolase 2 family.

This is an uncharacterized protein from Rickettsia bellii (strain RML369-C).